A 1073-amino-acid polypeptide reads, in one-letter code: Carbamoyl phosphate synthase large chain (1073 aa).

The tract at residues 1–399 (MPKREDIKKV…SLLKAFKSLD (399 aa)) is carboxyphosphate synthetic domain. Positions 129, 169, 175, 176, 208, 210, 215, 241, 242, 243, 284, and 296 each coordinate ATP. Residues 133–325 (KETMLSIGEK…IARVTAKIAI (193 aa)) form the ATP-grasp 1 domain. Mg(2+) is bound by residues glutamine 284, glutamate 296, and asparagine 298. Mn(2+)-binding residues include glutamine 284, glutamate 296, and asparagine 298. The segment at 400–540 (IDNQLGIKRW…YSTYEDTCET (141 aa)) is oligomerization domain. The tract at residues 541–931 (NSTDKKKILI…YKAELAADNL (391 aa)) is carbamoyl phosphate synthetic domain. Residues 672-863 (YLLMQELGIP…LAKIAAKVIA (192 aa)) form the ATP-grasp 2 domain. ATP is bound by residues arginine 708, aspartate 747, leucine 749, glutamate 754, glycine 779, valine 780, histidine 781, serine 782, glutamine 822, and glutamate 834. Mg(2+)-binding residues include glutamine 822, glutamate 834, and asparagine 836. Positions 822, 834, and 836 each coordinate Mn(2+). One can recognise an MGS-like domain in the interval 930 to 1071 (NLLPLTGKVF…NEYHKEMEQK (142 aa)). Residues 932 to 1073 (LPLTGKVFLS…YHKEMEQKEE (142 aa)) form an allosteric domain region.

This sequence belongs to the CarB family. Composed of two chains; the small (or glutamine) chain promotes the hydrolysis of glutamine to ammonia, which is used by the large (or ammonia) chain to synthesize carbamoyl phosphate. Tetramer of heterodimers (alpha,beta)4. It depends on Mg(2+) as a cofactor. The cofactor is Mn(2+).

It carries out the reaction hydrogencarbonate + L-glutamine + 2 ATP + H2O = carbamoyl phosphate + L-glutamate + 2 ADP + phosphate + 2 H(+). It catalyses the reaction hydrogencarbonate + NH4(+) + 2 ATP = carbamoyl phosphate + 2 ADP + phosphate + 2 H(+). Its pathway is amino-acid biosynthesis; L-arginine biosynthesis; carbamoyl phosphate from bicarbonate: step 1/1. It functions in the pathway pyrimidine metabolism; UMP biosynthesis via de novo pathway; (S)-dihydroorotate from bicarbonate: step 1/3. Functionally, large subunit of the glutamine-dependent carbamoyl phosphate synthetase (CPSase). CPSase catalyzes the formation of carbamoyl phosphate from the ammonia moiety of glutamine, carbonate, and phosphate donated by ATP, constituting the first step of 2 biosynthetic pathways, one leading to arginine and/or urea and the other to pyrimidine nucleotides. The large subunit (synthetase) binds the substrates ammonia (free or transferred from glutamine from the small subunit), hydrogencarbonate and ATP and carries out an ATP-coupled ligase reaction, activating hydrogencarbonate by forming carboxy phosphate which reacts with ammonia to form carbamoyl phosphate. In Methanosarcina mazei (strain ATCC BAA-159 / DSM 3647 / Goe1 / Go1 / JCM 11833 / OCM 88) (Methanosarcina frisia), this protein is Carbamoyl phosphate synthase large chain.